Reading from the N-terminus, the 210-residue chain is UMP-CMP kinase 3 (210 aa).

34 to 39 (GSGKGT) contributes to the ATP binding site. Residues 54-83 (SAGDLLRAEIKSGSENGTMIENMIKEGKIV) are NMP. Residues arginine 60, 81 to 83 (KIV), and 108 to 111 (GFPR) contribute to the a ribonucleoside 5'-phosphate site. CMP is bound at residue asparagine 115. The tract at residues 146 to 154 (GRNQGRVDD) is LID. Residue arginine 147 participates in ATP binding. A ribonucleoside 5'-phosphate-binding residues include arginine 151 and arginine 162. Position 190 (lysine 190) interacts with ATP.

The protein belongs to the adenylate kinase family. UMP-CMP kinase subfamily. As to quaternary structure, monomer. Requires Mg(2+) as cofactor.

It localises to the cytoplasm. The protein resides in the nucleus. The catalysed reaction is UMP + ATP = UDP + ADP. It carries out the reaction CMP + ATP = CDP + ADP. It catalyses the reaction dCMP + ATP = dCDP + ADP. In terms of biological role, catalyzes the phosphorylation of pyrimidine nucleoside monophosphates at the expense of ATP. Plays an important role in de novo pyrimidine nucleotide biosynthesis. Has preference for UMP and CMP as phosphate acceptors. This Oryza sativa subsp. japonica (Rice) protein is UMP-CMP kinase 3 (URA6).